Here is a 312-residue protein sequence, read N- to C-terminus: Glycerol 2-dehydrogenase (NADP(+)) (312 aa).

Residue Tyr56 is the Proton donor of the active site. A substrate-binding site is contributed by His112. 220 to 274 (SPLGSTDAPLLKEPVILEIAKKNNVQPGHVVISWHVQRGYVVLPKSVNPDRIKTN) serves as a coordination point for NADP(+). A Phosphoserine modification is found at Ser306.

Belongs to the aldo/keto reductase family.

Its subcellular location is the cytoplasm. The enzyme catalyses glycerol + NADP(+) = dihydroxyacetone + NADPH + H(+). Its function is as follows. Glycerol dehydrogenase involved in glycerol catabolism under microaerobic conditions. Has mRNA binding activity. This chain is Glycerol 2-dehydrogenase (NADP(+)) (GCY1), found in Saccharomyces cerevisiae (strain ATCC 204508 / S288c) (Baker's yeast).